A 237-amino-acid chain; its full sequence is Phosphoribosylaminoimidazole-succinocarboxamide synthase (237 aa).

The protein belongs to the SAICAR synthetase family.

It catalyses the reaction 5-amino-1-(5-phospho-D-ribosyl)imidazole-4-carboxylate + L-aspartate + ATP = (2S)-2-[5-amino-1-(5-phospho-beta-D-ribosyl)imidazole-4-carboxamido]succinate + ADP + phosphate + 2 H(+). Its pathway is purine metabolism; IMP biosynthesis via de novo pathway; 5-amino-1-(5-phospho-D-ribosyl)imidazole-4-carboxamide from 5-amino-1-(5-phospho-D-ribosyl)imidazole-4-carboxylate: step 1/2. In Listeria welshimeri serovar 6b (strain ATCC 35897 / DSM 20650 / CCUG 15529 / CIP 8149 / NCTC 11857 / SLCC 5334 / V8), this protein is Phosphoribosylaminoimidazole-succinocarboxamide synthase.